We begin with the raw amino-acid sequence, 184 residues long: UPF0149 protein Avin_47340 (184 aa).

It belongs to the UPF0149 family.

This Azotobacter vinelandii (strain DJ / ATCC BAA-1303) protein is UPF0149 protein Avin_47340.